The sequence spans 551 residues: Putative transport protein CGSHiGG_02670 (551 aa).

The next 5 helical transmembrane spans lie at 4-24, 28-48, 65-85, 95-115, and 157-177; these read IAIT…IGHW, GVGL…HFTN, FGLI…FFSS, AFAI…HKIA, and VSYA…MWLI. RCK C-terminal domains are found at residues 191 to 275 and 277 to 360; these read RFNA…IIGH and VDAP…VIGN. 6 helical membrane-spanning segments follow: residues 370-390, 402-424, 438-458, 463-483, 492-512, and 529-549; these read MLPV…PFYI, AGGP…LYWF, IVLF…DTLV, LEWM…VGTI, YLTI…LAFA, and VYPL…VLLW.

Belongs to the AAE transporter (TC 2.A.81) family. YidE subfamily.

It localises to the cell membrane. The sequence is that of Putative transport protein CGSHiGG_02670 from Haemophilus influenzae (strain PittGG).